Reading from the N-terminus, the 451-residue chain is GABA transporter 1 (451 aa).

11 helical membrane-spanning segments follow: residues 35–55 (CGFH…PYAF), 57–77 (FLGW…TFYS), 115–135 (VGPI…LLGG), 153–173 (LFEF…FPSF), 182–202 (LSLL…IYIG), 222–242 (VFGI…GIIP), 262–282 (MCYL…YWAF), 308–328 (FIFL…VVYL), 356–376 (LVVR…LPFF), 382–402 (LLGA…FFNF), and 411–431 (FIFW…VIAM).

It belongs to the amino acid/polyamine transporter 2 family. Amino acid/auxin permease (AAAP) (TC 2.A.18.2) subfamily. As to expression, highly expressed in flowers and at lower levels in roots, leaves and stems.

The protein resides in the cell membrane. Its function is as follows. High affinity gamma-aminobutyric acid (GABA) transporter probably involved in GABA uptake into cells. When expressed in a heterologous system (Xenopus oocytes), imports GABA, butylamine, beta- and L-Alanine, 5-aminovaleric acid, 6-aminocaproic acid and 8-aminocaprylic acid, but does not mediate the transport of proline or glycine betaine. The chain is GABA transporter 1 (GAT1) from Arabidopsis thaliana (Mouse-ear cress).